The following is a 244-amino-acid chain: Osmotin-like protein OSM34 (244 aa).

The N-terminal stretch at 1–22 is a signal peptide; that stretch reads MANLLVSTFIFSALLLISTATA. Cystine bridges form between C31-C222, C72-C82, C87-C93, C138-C212, C143-C195, C151-C161, C165-C174, and C175-C182.

It belongs to the thaumatin family.

The chain is Osmotin-like protein OSM34 (OSM34) from Arabidopsis thaliana (Mouse-ear cress).